A 536-amino-acid polypeptide reads, in one-letter code: Lipid scramblase CLPTM1L (536 aa).

Over 1–9 (MLSRSSFTS) the chain is Cytoplasmic. The chain crosses the membrane as a helical span at residues 10–30 (LAVGVFAVYVAHTCWVMYGIV). At 31–284 (YTRPCPSGGA…VKGIFVDTNL (254 aa)) the chain is on the extracellular side. N-linked (GlcNAc...) asparagine glycans are attached at residues Asn-92, Asn-102, and Asn-229. A helical membrane pass occupies residues 285 to 305 (YFLALTFFVAAFHLLFDFLAF). At 306–324 (KNDISFWKKKRSMIGMSTK) the chain is on the cytoplasmic side. The chain crosses the membrane as a helical span at residues 325–342 (AVLWRCFSTVVIFLFLLD). Residues 343–346 (EQTS) are Extracellular-facing. The helical transmembrane segment at 347-364 (LLVLIPAGIGAVIELWKV) threads the bilayer. The Cytoplasmic segment spans residues 365–402 (KKALKMTVKWQGIRPKVQFGASNDSEKKTEEYDTQAMK). Residues 403-423 (YLSYLLYPLCIGGAAYSLLNV) traverse the membrane as a helical segment. Topologically, residues 424 to 428 (KYKSW) are extracellular. A helical transmembrane segment spans residues 429 to 449 (YSWLINSFVNGVYAFGFLFML). At 450-536 (PQLFVNYKMK…YEEKPKKKSS (87 aa)) the chain is on the cytoplasmic side.

This sequence belongs to the CLPTM1 family.

Its subcellular location is the endoplasmic reticulum membrane. It carries out the reaction a 6-(alpha-D-glucosaminyl)-1-(1,2-diacyl-sn-glycero-3-phospho)-1D-myo-inositol(in) = a 6-(alpha-D-glucosaminyl)-1-(1,2-diacyl-sn-glycero-3-phospho)-1D-myo-inositol(out). The catalysed reaction is 6-(alpha-D-glucosaminyl)-(1-octadecanoyl,2-(9Z)-octadecenoyl-sn-glycero-3-phospho)-1D-myo-inositol(in) = 6-(alpha-D-glucosaminyl)-(1-octadecanoyl,2-(9Z)-octadecenoyl-sn-glycero-3-phospho)-1D-myo-inositol(out). The enzyme catalyses a 1,2-diacyl-sn-glycero-3-phospho-(1D-myo-inositol)(in) = a 1,2-diacyl-sn-glycero-3-phospho-(1D-myo-inositol)(out). It catalyses the reaction a 1,2-diacyl-sn-glycero-3-phosphocholine(in) = a 1,2-diacyl-sn-glycero-3-phosphocholine(out). It carries out the reaction a 1,2-diacyl-sn-glycero-3-phosphoethanolamine(in) = a 1,2-diacyl-sn-glycero-3-phosphoethanolamine(out). Functionally, scramblase that mediates the translocation of glucosaminylphosphatidylinositol (alpha-D-GlcN-(1-6)-(1,2-diacyl-sn-glycero-3-phospho)-1D-myo-inositol, GlcN-PI) across the endoplasmic reticulum (ER) membrane, from the cytosolic leaflet to the luminal leaflet of the ER membrane, where it participates in the biosynthesis of glycosylphosphatidylinositol (GPI). GPI is a lipid glycoconjugate involved in post-translational modification of proteins. Can also translocate 1,2-diacyl-sn-glycero-3-phospho-(1D-myo-inositol) (phosphatidylinositol or PI), as well as several other phospholipids (1,2-diacyl-sn-glycero-3-phosphocholine, 1,2-diacyl-sn-glycero-3-phosphoethanolamine), and N-acetylglucosaminylphosphatidylinositol (GlcNAc-PI) in vitro. The protein is Lipid scramblase CLPTM1L (CLPTM1L) of Gallus gallus (Chicken).